The chain runs to 83 residues: Sulfur carrier protein TusA (83 aa).

The Cysteine persulfide intermediate role is filled by cysteine 19.

It belongs to the sulfur carrier protein TusA family.

The protein resides in the cytoplasm. Sulfur carrier protein which probably makes part of a sulfur-relay system. The sequence is that of Sulfur carrier protein TusA from Aliivibrio fischeri (strain ATCC 700601 / ES114) (Vibrio fischeri).